The primary structure comprises 166 residues: Large ribosomal subunit protein uL10 (166 aa).

Belongs to the universal ribosomal protein uL10 family. As to quaternary structure, part of the ribosomal stalk of the 50S ribosomal subunit. The N-terminus interacts with L11 and the large rRNA to form the base of the stalk. The C-terminus forms an elongated spine to which L12 dimers bind in a sequential fashion forming a multimeric L10(L12)X complex.

In terms of biological role, forms part of the ribosomal stalk, playing a central role in the interaction of the ribosome with GTP-bound translation factors. The protein is Large ribosomal subunit protein uL10 of Neisseria gonorrhoeae (strain ATCC 700825 / FA 1090).